The following is a 328-amino-acid chain: Formimidoylglutamase (328 aa).

Mn(2+) contacts are provided by H133, D159, H161, D163, D253, and D255.

Belongs to the arginase family. Requires Mn(2+) as cofactor.

It catalyses the reaction N-formimidoyl-L-glutamate + H2O = formamide + L-glutamate. The protein operates within amino-acid degradation; L-histidine degradation into L-glutamate; L-glutamate from N-formimidoyl-L-glutamate (hydrolase route): step 1/1. In terms of biological role, catalyzes the conversion of N-formimidoyl-L-glutamate to L-glutamate and formamide. The sequence is that of Formimidoylglutamase from Streptococcus pyogenes serotype M18 (strain MGAS8232).